Here is a 202-residue protein sequence, read N- to C-terminus: Holliday junction resolvase RecU (202 aa).

Mg(2+) is bound by residues threonine 85, aspartate 87, glutamate 100, and glutamine 119.

Belongs to the RecU family. It depends on Mg(2+) as a cofactor.

The protein resides in the cytoplasm. The enzyme catalyses Endonucleolytic cleavage at a junction such as a reciprocal single-stranded crossover between two homologous DNA duplexes (Holliday junction).. Its function is as follows. Endonuclease that resolves Holliday junction intermediates in genetic recombination. Cleaves mobile four-strand junctions by introducing symmetrical nicks in paired strands. Promotes annealing of linear ssDNA with homologous dsDNA. Required for DNA repair, homologous recombination and chromosome segregation. The chain is Holliday junction resolvase RecU from Streptococcus equi subsp. equi (strain 4047).